The primary structure comprises 323 residues: tRNA U34 carboxymethyltransferase (323 aa).

Residues K91, W105, K110, G130, 152–154 (DPT), 181–182 (IE), M196, Y200, and R315 each bind carboxy-S-adenosyl-L-methionine.

The protein belongs to the class I-like SAM-binding methyltransferase superfamily. CmoB family. Homotetramer.

It catalyses the reaction carboxy-S-adenosyl-L-methionine + 5-hydroxyuridine(34) in tRNA = 5-carboxymethoxyuridine(34) in tRNA + S-adenosyl-L-homocysteine + H(+). In terms of biological role, catalyzes carboxymethyl transfer from carboxy-S-adenosyl-L-methionine (Cx-SAM) to 5-hydroxyuridine (ho5U) to form 5-carboxymethoxyuridine (cmo5U) at position 34 in tRNAs. The protein is tRNA U34 carboxymethyltransferase of Salmonella gallinarum (strain 287/91 / NCTC 13346).